Consider the following 218-residue polypeptide: Adenylate kinase (218 aa).

An ATP-binding site is contributed by Gly-10–Thr-15. The NMP stretch occupies residues Ser-30 to Val-59. Residues Thr-31, Arg-36, Gly-57–Val-59, Gly-85–Arg-88, and Gln-92 each bind AMP. The LID stretch occupies residues Gly-122–Asp-159. ATP-binding positions include Arg-123 and Val-132–Tyr-133. AMP-binding residues include Arg-156 and Arg-167. Residue Gly-203 coordinates ATP.

It belongs to the adenylate kinase family. Monomer.

The protein localises to the cytoplasm. The catalysed reaction is AMP + ATP = 2 ADP. It participates in purine metabolism; AMP biosynthesis via salvage pathway; AMP from ADP: step 1/1. In terms of biological role, catalyzes the reversible transfer of the terminal phosphate group between ATP and AMP. Plays an important role in cellular energy homeostasis and in adenine nucleotide metabolism. This chain is Adenylate kinase, found in Legionella pneumophila (strain Lens).